A 192-amino-acid polypeptide reads, in one-letter code: Apoptosis regulator BAX (192 aa).

At Met1 the chain carries N-acetylmethionine. A BH3 motif is present at residues 59–73; the sequence is LSECLKRIGDELDSN. A BH1 motif is present at residues 98–118; the sequence is DMFSDGNFNWGRVVALFYFAS. Lys128 is covalently cross-linked (Glycyl lysine isopeptide (Lys-Gly) (interchain with G-Cter in ubiquitin)). Positions 150 to 165 match the BH2 motif; the sequence is GWIQDQGGWDGLLSYF. The helical transmembrane segment at 172-192 threads the bilayer; sequence TVTIFVAGVLTASLTIWKKMG. Lys190 participates in a covalent cross-link: Glycyl lysine isopeptide (Lys-Gly) (interchain with G-Cter in ubiquitin).

This sequence belongs to the Bcl-2 family. As to quaternary structure, homodimer. Forms higher oligomers under stress conditions. Forms heterooligomers with BAK. Interacts with BCL2L11. Interaction with BCL2L11 promotes BAX oligomerization and association with mitochondrial membranes, with subsequent release of cytochrome c. Forms heterodimers with BCL2, BCL2L1 isoform Bcl-X(L), BCL2L2, MCL1 and A1. Interacts with SH3GLB1. Interacts with humanin; forms fibers with humanin which results in BAX conformational changes and sequestering of BAX into the fibers, preventing BAX activation. Interacts with SFN and YWHAZ; the interaction occurs in the cytoplasm. Under stress conditions, JNK-mediated phosphorylation of SFN and YWHAZ, releases BAX to mitochondria. Interacts with RNF144B, which regulates the ubiquitin-dependent stability of BAX. Interacts with CLU under stress conditions that cause a conformation change leading to BAX oligomerization and association with mitochondria. Does not interact with CLU in unstressed cells. Interacts with FAIM2/LFG2. Interacts with RTL10/BOP. Interacts (via a C-terminal 33 residues) with NOL3 (via CARD domain); inhibits BAX activation and translocation and consequently cytochrome c release from mitochondria. Interacts with GIMAP3/IAN4 and GIMAP5/IAN5; this interaction is increased, when cells initiate apoptosis upon IL2 withdrawal. Interacts with IRF3; the interaction is direct, increases upon Sendai virus infection and mediates the formation of the apoptosis complex TOMM70:HSP90AA1:IRF3:BAX. Interacts with MOAP1, facilitating BAX-dependent mitochondrial outer membrane permeabilization and apoptosis. Interacts with BCL2L10/BCL-B. Interacts with non-acetylated XRCC6/Ku70; this interaction leads to BAX sequestration in the cytosol, away from the mitochondria, preventing BAX-mediated apoptosis. Interacts with BCL2A1 and BCL2L1 isoform Bcl-X(L). In terms of assembly, (Microbial infection) Interacts with adenovirus E1B 19K protein; this interaction blocks BAX oligomerization. As to quaternary structure, (Microbial infection) Interacts with human cytomegalovirus/HHV-5 protein vMIA/UL37. (Microbial infection) Interacts with enterovirus protein 2B; this interaction activates BAX-induced apoptosis. In terms of processing, ubiquitinated in the absence of XRCC6/Ku70. Ubiquitination promotes protein degradation. Ubiquitinated on Lys-128 and Lys-190. 'Lys-63'-linked polyubiquitin chains on Lys-128 are removed by USP12. Expressed in a wide variety of tissues. Isoform Psi is found in glial tumors. Isoform Alpha is expressed in spleen, breast, ovary, testis, colon and brain, and at low levels in skin and lung. Isoform Sigma is expressed in spleen, breast, ovary, testis, lung, colon, brain and at low levels in skin. Isoform Alpha and isoform Sigma are expressed in pro-myelocytic leukemia, histiocytic lymphoma, Burkitt's lymphoma, T-cell lymphoma, lymphoblastic leukemia, breast adenocarcinoma, ovary adenocarcinoma, prostate carcinoma, prostate adenocarcinoma, lung carcinoma, epidermoid carcinoma, small cell lung carcinoma and colon adenocarcinoma cell lines.

It is found in the mitochondrion outer membrane. The protein resides in the cytoplasm. It localises to the nucleus. Plays a role in the mitochondrial apoptotic process. Under normal conditions, BAX is largely cytosolic via constant retrotranslocation from mitochondria to the cytosol mediated by BCL2L1/Bcl-xL, which avoids accumulation of toxic BAX levels at the mitochondrial outer membrane (MOM). Under stress conditions, undergoes a conformation change that causes translocation to the mitochondrion membrane, leading to the release of cytochrome c that then triggers apoptosis. Promotes activation of CASP3, and thereby apoptosis. The sequence is that of Apoptosis regulator BAX (BAX) from Homo sapiens (Human).